The primary structure comprises 243 residues: MRAPQHNSDFSRTVNQLADDPNPYEPEVGSMPKNEFSRADLDNVNKTGTTTIGITTEDGVVIATDMRASLGGRFVSNKNVQKVEQIHPTGALTMVGSVGGAQSFIGSLRAEVNLYEARRGEPISMDALATLAGNFARGGPFFAIHPILGGVDEEGSHVYSIDPAGGVMEDDYTVTGSGMQLAYGLLEQEFEEDLSNDEATTVAARAIKSAAERDTGSGNGVFLCEITDEGVDIHGHHDFDEVV.

The span at 1-16 (MRAPQHNSDFSRTVNQ) shows a compositional bias: polar residues. The disordered stretch occupies residues 1-29 (MRAPQHNSDFSRTVNQLADDPNPYEPEVG). A propeptide spans 1–48 (MRAPQHNSDFSRTVNQLADDPNPYEPEVGSMPKNEFSRADLDNVNKTG) (removed in mature form; by autocatalysis). Thr-49 serves as the catalytic Nucleophile.

It belongs to the peptidase T1B family. As to quaternary structure, the 20S proteasome core is composed of 14 alpha and 14 beta subunits that assemble into four stacked heptameric rings, resulting in a barrel-shaped structure. The two inner rings, each composed of seven catalytic beta subunits, are sandwiched by two outer rings, each composed of seven alpha subunits. The catalytic chamber with the active sites is on the inside of the barrel. Has a gated structure, the ends of the cylinder being occluded by the N-termini of the alpha-subunits. Is capped at one or both ends by the proteasome regulatory ATPase, PAN.

It localises to the cytoplasm. It catalyses the reaction Cleavage of peptide bonds with very broad specificity.. With respect to regulation, the formation of the proteasomal ATPase PAN-20S proteasome complex, via the docking of the C-termini of PAN into the intersubunit pockets in the alpha-rings, triggers opening of the gate for substrate entry. Interconversion between the open-gate and close-gate conformations leads to a dynamic regulation of the 20S proteasome proteolysis activity. In terms of biological role, component of the proteasome core, a large protease complex with broad specificity involved in protein degradation. The polypeptide is Proteasome subunit beta (Natrialba magadii (strain ATCC 43099 / DSM 3394 / CCM 3739 / CIP 104546 / IAM 13178 / JCM 8861 / NBRC 102185 / NCIMB 2190 / MS3) (Natronobacterium magadii)).